Reading from the N-terminus, the 350-residue chain is Mitochondrial glycine transporter (350 aa).

Solcar repeat units lie at residues 23-107 (SKPK…LRQC), 134-218 (LSHT…SKKN), and 250-334 (SSIS…LILK). Transmembrane regions (helical) follow at residues 29–54 (FIAG…TRIQ), 82–108 (GTLP…RQCI), 140–165 (LLTG…VRYE), 193–216 (GFGA…EQSK), 254–280 (VNFV…KTRL), and 309–327 (GLGL…AWTV).

The protein belongs to the mitochondrial carrier (TC 2.A.29) family. SLC25A38 subfamily.

The protein localises to the mitochondrion inner membrane. The catalysed reaction is glycine(in) = glycine(out). In terms of biological role, mitochondrial glycine transporter that imports glycine into the mitochondrial matrix. Plays an important role in providing glycine for the first enzymatic step in heme biosynthesis, the condensation of glycine with succinyl-CoA to produce 5-aminolevulinate (ALA) in the mitochondrial matrix. The sequence is that of Mitochondrial glycine transporter from Ajellomyces capsulatus (strain NAm1 / WU24) (Darling's disease fungus).